The primary structure comprises 428 residues: Chaperone SurA (428 aa).

An N-terminal signal peptide occupies residues 1 to 20 (MKNWKTLLLGIAMIANTSFA). PpiC domains are found at residues 171-272 (STEL…KVND) and 282-382 (VTEV…ELLD).

It is found in the periplasm. It carries out the reaction [protein]-peptidylproline (omega=180) = [protein]-peptidylproline (omega=0). Chaperone involved in the correct folding and assembly of outer membrane proteins. Recognizes specific patterns of aromatic residues and the orientation of their side chains, which are found more frequently in integral outer membrane proteins. May act in both early periplasmic and late outer membrane-associated steps of protein maturation. The protein is Chaperone SurA of Salmonella paratyphi A (strain ATCC 9150 / SARB42).